Consider the following 515-residue polypeptide: Galactokinase (515 aa).

4 residues coordinate alpha-D-galactose: R48, D54, H55, and D57. Residues G155, G157, S159, and S160 each coordinate ATP. D205 contributes to the alpha-D-galactose binding site. D205 functions as the Proton acceptor in the catalytic mechanism. ATP contacts are provided by S249, N250, and K251. Y259 provides a ligand contact to alpha-D-galactose.

Belongs to the GHMP kinase family. GalK subfamily.

The catalysed reaction is alpha-D-galactose + ATP = alpha-D-galactose 1-phosphate + ADP + H(+). It participates in carbohydrate metabolism; galactose metabolism. Galactokinase is a key enzyme in the galactose metabolism where it catalyzes the conversion of alpha-D-galactose to galactose 1-phosphate. Can also induce the transcription of the gal genes in response to the organism being challenged with galactose as the sole source of carbon. This is Galactokinase from Candida albicans (Yeast).